The following is a 296-amino-acid chain: Nucleotide-binding protein SPJ_1472 (296 aa).

13–20 (GMSGAGKT) provides a ligand contact to ATP. 63 to 66 (DMRS) lines the GTP pocket.

This sequence belongs to the RapZ-like family.

In terms of biological role, displays ATPase and GTPase activities. This Streptococcus pneumoniae (strain JJA) protein is Nucleotide-binding protein SPJ_1472.